Consider the following 185-residue polypeptide: Neuronal vesicle trafficking-associated protein 1 (185 aa).

Over 1–82 (MVKLGNNFAE…ITEGVTERFK (82 aa)) the chain is Cytoplasmic. A helical; Signal-anchor for type II membrane protein membrane pass occupies residues 83–103 (VSVLVLFALAFLTCVVFLVVY). Topologically, residues 104-185 (KVYKYDRACP…QETEAAEKSA (82 aa)) are lumenal. Positions 129–164 (ESYYAEQDSSAREKFYTVINHYNLAKQSITRSVSPW) are required for GRIP1 interaction.

The protein belongs to the NSG family. Forms a complex with GRIP1, GRIA2 and STX12 through direct interaction with GRIP1; controls the intracellular fate of AMPAR and the endosomal sorting of the GRIA2 subunit toward recycling and membrane targeting. Interacts with STX12. Interacts with APP; could regulate APP processing. Interacts with FAM171A1.

It localises to the membrane. The protein resides in the golgi apparatus. It is found in the trans-Golgi network membrane. Its subcellular location is the endosome membrane. The protein localises to the cell projection. It localises to the dendrite. The protein resides in the early endosome membrane. It is found in the late endosome membrane. Its subcellular location is the lysosome lumen. The protein localises to the recycling endosome membrane. It localises to the cytoplasmic vesicle membrane. The protein resides in the golgi stack membrane. It is found in the endosome. Its subcellular location is the multivesicular body membrane. The protein localises to the endoplasmic reticulum membrane. Its function is as follows. Plays a role in the recycling mechanism in neurons of multiple receptors, including AMPAR, APP and L1CAM and acts at the level of early endosomes to promote sorting of receptors toward a recycling pathway. Regulates sorting and recycling of GRIA2 through interaction with GRIP1 and then contributes to the regulation of synaptic transmission and plasticity by affecting the recycling and targeting of AMPA receptors to the synapse. Is required for faithful sorting of L1CAM to axons by facilitating trafficking from somatodendritic early endosome or the recycling endosome. In an other hand, induces apoptosis via the activation of CASP3 in response to DNA damage. This Macaca fascicularis (Crab-eating macaque) protein is Neuronal vesicle trafficking-associated protein 1.